The sequence spans 237 residues: High-affinity branched-chain amino acid transport ATP-binding protein LivF (237 aa).

The region spanning 6–237 (LSFDKVSAHY…EAVRSAYLGG (232 aa)) is the ABC transporter domain. 38-45 (GANGAGKT) is a binding site for ATP.

This sequence belongs to the ABC transporter superfamily.

In terms of biological role, component of the leucine-specific transport system. The chain is High-affinity branched-chain amino acid transport ATP-binding protein LivF (livF) from Escherichia coli (strain K12).